Reading from the N-terminus, the 325-residue chain is Elongation factor P--(R)-beta-lysine ligase (325 aa).

A substrate-binding site is contributed by S76–E78. ATP is bound by residues R100–E102 and N109. Y118 serves as a coordination point for substrate. E244–L245 is an ATP binding site. E251 is a substrate binding site. G300 serves as a coordination point for ATP.

The protein belongs to the class-II aminoacyl-tRNA synthetase family. EpmA subfamily. Homodimer.

It carries out the reaction D-beta-lysine + L-lysyl-[protein] + ATP = N(6)-((3R)-3,6-diaminohexanoyl)-L-lysyl-[protein] + AMP + diphosphate + H(+). Its function is as follows. With EpmB is involved in the beta-lysylation step of the post-translational modification of translation elongation factor P (EF-P). Catalyzes the ATP-dependent activation of (R)-beta-lysine produced by EpmB, forming a lysyl-adenylate, from which the beta-lysyl moiety is then transferred to the epsilon-amino group of a conserved specific lysine residue in EF-P. This Yersinia pseudotuberculosis serotype O:1b (strain IP 31758) protein is Elongation factor P--(R)-beta-lysine ligase.